The following is a 458-amino-acid chain: Ammonium transporter Rh type B (458 aa).

At 1 to 13 the chain is on the cytoplasmic side; it reads MAGSPSRAAGRRL. Residues 14–34 form a helical membrane-spanning segment; the sequence is QLPLLCLFLQGATAVLFAVFV. Over 35–61 the chain is Extracellular; the sequence is RYNHKTDAALWHRGNHSNADNEFYFRY. Residue Asn49 is glycosylated (N-linked (GlcNAc...) asparagine). A helical membrane pass occupies residues 62–82; sequence PSFQDVHAMVFVGFGFLMVFL. Over 83–86 the chain is Cytoplasmic; sequence QRYG. The helical transmembrane segment at 87 to 107 threads the bilayer; that stretch reads FSSVGFTFLLAAFALQWSTLV. The Extracellular segment spans residues 108–124; that stretch reads QGFLHSFHSGHIHVGVE. Residues 125–145 form a helical membrane-spanning segment; sequence SMINADFCAGAVLISFGAVLG. Residues 146 to 149 are Cytoplasmic-facing; that stretch reads KTGP. Residues 150–170 traverse the membrane as a helical segment; it reads AQLLLMALLEVVLFGINEFVL. At 171-178 the chain is on the extracellular side; sequence LHLLGVRD. A helical transmembrane segment spans residues 179–201; sequence AGGSMTIHTFGAYFGLVLSRVLY. Residues 202 to 219 lie on the Cytoplasmic side of the membrane; it reads RPQLEKSKHRQGSVYHSD. Residues 220–240 traverse the membrane as a helical segment; sequence LFAMIGTIFLWIFWPSFNSAL. At 241–251 the chain is on the extracellular side; the sequence is TALGAGQHRTA. Residues 252–272 form a helical membrane-spanning segment; it reads LNTYYSLAASTLGTFALSALV. Topologically, residues 273 to 282 are cytoplasmic; the sequence is GEDGRLDMVH. A helical membrane pass occupies residues 283–303; sequence IQNAALAGGVVVGTSSEMMLT. Pro304 is a topological domain (extracellular). A helical transmembrane segment spans residues 305–325; that stretch reads FGALAAGFLAGTVSTLGYKFF. At 326-346 the chain is on the cytoplasmic side; that stretch reads TPILESKFKVQDTCGVHNLHG. A helical membrane pass occupies residues 347–367; that stretch reads MPGVLGALLGVLVAGLATHEA. The Extracellular portion of the chain corresponds to 368–393; it reads YGDGLESVFPLIAEGQRSATSQAMLQ. The helical transmembrane segment at 394 to 414 threads the bilayer; it reads LFGLFVTLMFASVGGGLGGLL. Residues 415–458 are Cytoplasmic-facing; the sequence is LKLPFLDSPPDSQCYEDQVHWQVPGEHEDEAQRPLRVEEADTQA. Residues 416–424 form an interaction with ANK3 region; it reads KLPFLDSPP. The Basolateral sorting signal motif lies at 429–432; that stretch reads YEDQ. Residues 439 to 458 are disordered; sequence GEHEDEAQRPLRVEEADTQA. Residues 444–458 are compositionally biased toward basic and acidic residues; that stretch reads EAQRPLRVEEADTQA.

This sequence belongs to the ammonium transporter (TC 2.A.49) family. Rh subfamily. Interacts (via C-terminus) with ANK2 and ANK3; required for targeting to the basolateral membrane. Post-translationally, N-glycosylated.

It is found in the cell membrane. The protein resides in the basolateral cell membrane. It carries out the reaction NH4(+)(in) = NH4(+)(out). The enzyme catalyses methylamine(out) = methylamine(in). The catalysed reaction is CO2(out) = CO2(in). In terms of biological role, ammonium transporter involved in the maintenance of acid-base homeostasis. Transports ammonium and its related derivative methylammonium across the basolateral plasma membrane of epithelial cells likely contributing to renal transepithelial ammonia transport and ammonia metabolism. May transport either NH4(+) or NH3 ammonia species predominantly mediating an electrogenic NH4(+) transport. May act as a CO2 channel providing for renal acid secretion. The protein is Ammonium transporter Rh type B (RHBG) of Macaca mulatta (Rhesus macaque).